Here is a 593-residue protein sequence, read N- to C-terminus: Polyphenol oxidase, chloroplastic (593 aa).

Over residues 1-13 (MTSLSPPVVTTPT) the composition is skewed to low complexity. The interval 1 to 34 (MTSLSPPVVTTPTVPNPATKPLSPFSQNNSQVSL) is disordered. The transit peptide at 1 to 89 (MTSLSPPVVT…GMGTDPFAFA (89 aa)) directs the protein to the chloroplast. Residues 24-34 (PFSQNNSQVSL) are compositionally biased toward polar residues. 2 disulfides stabilise this stretch: Cys-100/Cys-115 and Cys-114/Cys-176. Residues His-175, His-196, His-205, His-327, His-331, and His-361 each coordinate Cu cation. The segment at residues 179-196 (CDGAYDQVGFPELELQIH) is a cross-link (2'-(S-cysteinyl)-histidine (Cys-His)).

Belongs to the tyrosinase family. The cofactor is Cu(2+).

The protein resides in the plastid. It localises to the chloroplast thylakoid lumen. It catalyses the reaction 2 catechol + O2 = 2 1,2-benzoquinone + 2 H2O. Functionally, catalyzes the oxidation of mono- and o-diphenols to o-diquinones. The polypeptide is Polyphenol oxidase, chloroplastic (Malus domestica (Apple)).